Reading from the N-terminus, the 638-residue chain is Chaperone protein DnaK 2 (638 aa).

Threonine 199 is modified (phosphothreonine; by autocatalysis). Residues 604 to 626 form a disordered region; it reads AKEQAQSAPEGAQEADAAPADDV. Over residues 613 to 624 the composition is skewed to low complexity; it reads EGAQEADAAPAD.

This sequence belongs to the heat shock protein 70 family.

Functionally, acts as a chaperone. This Colwellia psychrerythraea (strain 34H / ATCC BAA-681) (Vibrio psychroerythus) protein is Chaperone protein DnaK 2.